The chain runs to 289 residues: MPKASHHDLRFAFRELLASGSCYHTASVFDPMSARIAADLGFEVGILGGSVASLQVLAAPDFALITLSEFVEQATRIGRVAQLPVLADADHGYGNALNVMRTVIELERAGVAGLTIEDTLLPAQFGRKSTDLISVEEGVGKIRAALEARVDSALAIIARTNAGVLTTEEIIVRTQSYQKAGADGICMVGVKDFDQLEQIAEHLSVPLMLVTYANPNLRDDERLARLGVRVVVDGHAAYFAAIKATYDCLRLQRGLQHKSDSLNATELSHTYTQPEDYIRWAKEYMSVEE.

A substrate-binding site is contributed by Ser50. Asp88 serves as a coordination point for Mg(2+). Residues Arg159 and His235 each coordinate substrate.

Belongs to the isocitrate lyase/PEP mutase superfamily. Oxaloacetate decarboxylase family. Homotetramer; dimer of dimers. Mg(2+) is required as a cofactor.

It catalyses the reaction oxaloacetate + H(+) = pyruvate + CO2. Its function is as follows. Catalyzes the decarboxylation of oxaloacetate into pyruvate. Seems to play a role in maintaining cellular concentrations of bicarbonate and pyruvate. The chain is Oxaloacetate decarboxylase from Pseudomonas entomophila (strain L48).